We begin with the raw amino-acid sequence, 278 residues long: Elongation factor Ts (278 aa).

The involved in Mg(2+) ion dislocation from EF-Tu stretch occupies residues Thr-80–Val-83.

Belongs to the EF-Ts family.

The protein localises to the cytoplasm. In terms of biological role, associates with the EF-Tu.GDP complex and induces the exchange of GDP to GTP. It remains bound to the aminoacyl-tRNA.EF-Tu.GTP complex up to the GTP hydrolysis stage on the ribosome. This is Elongation factor Ts from Pseudarthrobacter chlorophenolicus (strain ATCC 700700 / DSM 12829 / CIP 107037 / JCM 12360 / KCTC 9906 / NCIMB 13794 / A6) (Arthrobacter chlorophenolicus).